The following is a 251-amino-acid chain: Regulator of G-protein signaling 7-binding protein B (251 aa).

The interval 1–43 (MCSAPNGRKNRPRSAANIFQIGKSSVRDPERRESTESARRAQR) is disordered. Residues 25–43 (SVRDPERRESTESARRAQR) are compositionally biased toward basic and acidic residues. S-palmitoyl cysteine attachment occurs at residues C246 and C247.

Belongs to the RGS7BP/RGS9BP family. Palmitoylated. Undergoes rapid palmitoylation turnover. Palmitoylation regulates the cell membrane and nuclear shuttling and the regulation of GPCR signaling. Upon depalmitoylation, it is targeted from the plasma membrane into the nucleus. GPCR signaling inhibits depalmitoylation and promotes localization to the plasma membrane.

Its subcellular location is the nucleus. The protein resides in the cytoplasm. The protein localises to the cell membrane. In terms of biological role, regulator of G protein-coupled receptor (GPCR) signaling. Regulatory subunit of the R7-Gbeta5 complexes that acts by controlling the subcellular location of the R7-Gbeta5 complexes. When palmitoylated, it targets the R7-Gbeta5 complexes to the plasma membrane, leading to inhibit G protein alpha subunits. When it is unpalmitoylated, the R7-Gbeta5 complexes undergo a nuclear/cytoplasmic shuttling. In Danio rerio (Zebrafish), this protein is Regulator of G-protein signaling 7-binding protein B (rgs7bpb).